Consider the following 63-residue polypeptide: Large ribosomal subunit protein bL28 (63 aa).

The protein belongs to the bacterial ribosomal protein bL28 family.

This chain is Large ribosomal subunit protein bL28, found in Beutenbergia cavernae (strain ATCC BAA-8 / DSM 12333 / CCUG 43141 / JCM 11478 / NBRC 16432 / NCIMB 13614 / HKI 0122).